Reading from the N-terminus, the 301-residue chain is Nodulation protein D 3 (301 aa).

One can recognise an HTH lysR-type domain in the interval Leu6–Thr63. Residues Leu23–Arg43 constitute a DNA-binding region (H-T-H motif).

It belongs to the LysR transcriptional regulatory family.

In terms of biological role, nodD regulates the expression of the nodABCFE genes which encode other nodulation proteins. NodD is also a negative regulator of its own expression. Binds flavonoids as inducers. The polypeptide is Nodulation protein D 3 (nodD3) (Mesorhizobium japonicum (strain LMG 29417 / CECT 9101 / MAFF 303099) (Mesorhizobium loti (strain MAFF 303099))).